The following is a 231-amino-acid chain: Chalcone--flavanone isomerase (231 aa).

3 residues coordinate substrate: Thr46, Asn111, and Ser188.

This sequence belongs to the chalcone isomerase family. Pericarp.

It carries out the reaction a chalcone = a flavanone.. It participates in secondary metabolite biosynthesis; flavonoid biosynthesis. In terms of biological role, catalyzes the intramolecular cyclization of bicyclic chalcones into tricyclic (S)-flavanones. Responsible for the isomerization of 4,2',4',6'-tetrahydroxychalcone (also termed chalcone) into naringenin. This Zea mays (Maize) protein is Chalcone--flavanone isomerase (CHI).